A 392-amino-acid chain; its full sequence is Formate-dependent phosphoribosylglycinamide formyltransferase (392 aa).

Residues 22–23 (EL) and E82 contribute to the N(1)-(5-phospho-beta-D-ribosyl)glycinamide site. Residues R114, K155, 160–165 (SSGKGQ), 195–198 (EGLV), and E203 contribute to the ATP site. One can recognise an ATP-grasp domain in the interval 119 to 308 (RLAAETLGVP…EFALHVRAFL (190 aa)). Mg(2+) is bound by residues E267 and E279. N(1)-(5-phospho-beta-D-ribosyl)glycinamide-binding positions include D286, K355, and 362-363 (RR).

This sequence belongs to the PurK/PurT family. Homodimer.

The catalysed reaction is N(1)-(5-phospho-beta-D-ribosyl)glycinamide + formate + ATP = N(2)-formyl-N(1)-(5-phospho-beta-D-ribosyl)glycinamide + ADP + phosphate + H(+). It participates in purine metabolism; IMP biosynthesis via de novo pathway; N(2)-formyl-N(1)-(5-phospho-D-ribosyl)glycinamide from N(1)-(5-phospho-D-ribosyl)glycinamide (formate route): step 1/1. Its function is as follows. Involved in the de novo purine biosynthesis. Catalyzes the transfer of formate to 5-phospho-ribosyl-glycinamide (GAR), producing 5-phospho-ribosyl-N-formylglycinamide (FGAR). Formate is provided by PurU via hydrolysis of 10-formyl-tetrahydrofolate. This is Formate-dependent phosphoribosylglycinamide formyltransferase from Pectobacterium carotovorum subsp. carotovorum (strain PC1).